A 205-amino-acid chain; its full sequence is Large ribosomal subunit protein uL4 (205 aa).

The protein belongs to the universal ribosomal protein uL4 family. As to quaternary structure, part of the 50S ribosomal subunit.

Functionally, one of the primary rRNA binding proteins, this protein initially binds near the 5'-end of the 23S rRNA. It is important during the early stages of 50S assembly. It makes multiple contacts with different domains of the 23S rRNA in the assembled 50S subunit and ribosome. In terms of biological role, forms part of the polypeptide exit tunnel. The protein is Large ribosomal subunit protein uL4 of Thermus thermophilus (strain ATCC BAA-163 / DSM 7039 / HB27).